The chain runs to 209 residues: N-(5'-phosphoribosyl)anthranilate isomerase (209 aa).

It belongs to the TrpF family.

The catalysed reaction is N-(5-phospho-beta-D-ribosyl)anthranilate = 1-(2-carboxyphenylamino)-1-deoxy-D-ribulose 5-phosphate. It functions in the pathway amino-acid biosynthesis; L-tryptophan biosynthesis; L-tryptophan from chorismate: step 3/5. The protein is N-(5'-phosphoribosyl)anthranilate isomerase of Erythrobacter litoralis (strain HTCC2594).